The sequence spans 962 residues: UvrABC system protein A (962 aa).

38-45 (GISGSGKS) provides a ligand contact to ATP. ABC transporter domains follow at residues 319–597 (WSKS…PDSL) and 617–944 (PSGR…RFLR). 649 to 656 (GVSGSGKS) contacts ATP. The C4-type zinc finger occupies 748-774 (CEACGGDGIIKIEMHFLADVYVPCEVC).

Belongs to the ABC transporter superfamily. UvrA family. As to quaternary structure, forms a heterotetramer with UvrB during the search for lesions.

The protein resides in the cytoplasm. The UvrABC repair system catalyzes the recognition and processing of DNA lesions. UvrA is an ATPase and a DNA-binding protein. A damage recognition complex composed of 2 UvrA and 2 UvrB subunits scans DNA for abnormalities. When the presence of a lesion has been verified by UvrB, the UvrA molecules dissociate. In Methanothermobacter thermautotrophicus (strain ATCC 29096 / DSM 1053 / JCM 10044 / NBRC 100330 / Delta H) (Methanobacterium thermoautotrophicum), this protein is UvrABC system protein A.